The following is a 472-amino-acid chain: Probable endopolygalacturonase D (472 aa).

Residues 1 to 16 form the signal peptide; the sequence is MKRGALLVPFVPLALA. The N-linked (GlcNAc...) asparagine glycan is linked to Asn24. Cys129 and Cys144 are disulfide-bonded. PbH1 repeat units follow at residues 236-258, 259-297, and 298-319; these read MYYS…DIEH, TENL…DIKS, and STNL…AVSS. N-linked (GlcNAc...) asparagine glycosylation occurs at Asn300. Asp312 acts as the Proton donor in catalysis. Cys314 and Cys330 are joined by a disulfide. The active site involves His334. 4 PbH1 repeats span residues 349-370, 378-400, 412-433, and 444-467; these read VDGV…RIKS, VSNI…DIQQ, TNGV…SDGK, and CSNF…YPTD. N-linked (GlcNAc...) asparagine glycans are attached at residues Asn361, Asn385, and Asn419. Cystine bridges form between Cys439–Cys444 and Cys462–Cys469.

It belongs to the glycosyl hydrolase 28 family.

The protein resides in the secreted. It catalyses the reaction (1,4-alpha-D-galacturonosyl)n+m + H2O = (1,4-alpha-D-galacturonosyl)n + (1,4-alpha-D-galacturonosyl)m.. In terms of biological role, involved in maceration and soft-rotting of plant tissue. Hydrolyzes the 1,4-alpha glycosidic bonds of de-esterified pectate in the smooth region of the plant cell wall. The polypeptide is Probable endopolygalacturonase D (pgaD) (Neosartorya fischeri (strain ATCC 1020 / DSM 3700 / CBS 544.65 / FGSC A1164 / JCM 1740 / NRRL 181 / WB 181) (Aspergillus fischerianus)).